The primary structure comprises 92 residues: Probable Fe(2+)-trafficking protein (92 aa).

The protein belongs to the Fe(2+)-trafficking protein family.

Its function is as follows. Could be a mediator in iron transactions between iron acquisition and iron-requiring processes, such as synthesis and/or repair of Fe-S clusters in biosynthetic enzymes. In Anaeromyxobacter sp. (strain Fw109-5), this protein is Probable Fe(2+)-trafficking protein.